We begin with the raw amino-acid sequence, 330 residues long: Ketol-acid reductoisomerase (NADP(+)) (330 aa).

In terms of domain architecture, KARI N-terminal Rossmann spans 1–181 (MNVYYEQDAD…GGTKAGVIET (181 aa)). NADP(+)-binding positions include 24–27 (YGSQ), Arg47, Ser50, Ser52, and 82–85 (DQTQ). His107 is a catalytic residue. Gly133 provides a ligand contact to NADP(+). In terms of domain architecture, KARI C-terminal knotted spans 182–327 (NFKDETETDL…AKLRNMMSWL (146 aa)). The Mg(2+) site is built by Asp190, Glu194, Glu226, and Glu230. Ser251 lines the substrate pocket.

It belongs to the ketol-acid reductoisomerase family. It depends on Mg(2+) as a cofactor.

The enzyme catalyses (2R)-2,3-dihydroxy-3-methylbutanoate + NADP(+) = (2S)-2-acetolactate + NADPH + H(+). It carries out the reaction (2R,3R)-2,3-dihydroxy-3-methylpentanoate + NADP(+) = (S)-2-ethyl-2-hydroxy-3-oxobutanoate + NADPH + H(+). The protein operates within amino-acid biosynthesis; L-isoleucine biosynthesis; L-isoleucine from 2-oxobutanoate: step 2/4. It functions in the pathway amino-acid biosynthesis; L-valine biosynthesis; L-valine from pyruvate: step 2/4. Its function is as follows. Involved in the biosynthesis of branched-chain amino acids (BCAA). Catalyzes an alkyl-migration followed by a ketol-acid reduction of (S)-2-acetolactate (S2AL) to yield (R)-2,3-dihydroxy-isovalerate. In the isomerase reaction, S2AL is rearranged via a Mg-dependent methyl migration to produce 3-hydroxy-3-methyl-2-ketobutyrate (HMKB). In the reductase reaction, this 2-ketoacid undergoes a metal-dependent reduction by NADPH to yield (R)-2,3-dihydroxy-isovalerate. This chain is Ketol-acid reductoisomerase (NADP(+)), found in Chlorobium luteolum (strain DSM 273 / BCRC 81028 / 2530) (Pelodictyon luteolum).